The following is a 478-amino-acid chain: Secretogranin-3 (478 aa).

Positions 1–21 (MASKRLGFVVVLALVCQHINA) are cleaved as a signal peptide. 2 disordered regions span residues 22-126 (FPTP…NGMD) and 208-287 (IGDR…EDGL). A compositionally biased stretch (basic and acidic residues) spans 28-42 (PDDKYNRELTEEKPL). The span at 63-74 (AEEETNSEDDDI) shows a compositional bias: acidic residues. Residues 97-120 (ANERLGADDTDSTKNRRLADDYDS) are compositionally biased toward basic and acidic residues. The segment covering 235–259 (DEEDEVENEGGDDANGDEPQEEESR) has biased composition (acidic residues).

It localises to the cytoplasmic vesicle. The protein resides in the secretory vesicle lumen. Its subcellular location is the secretory vesicle membrane. The protein localises to the secreted. This Danio rerio (Zebrafish) protein is Secretogranin-3 (scg3).